The sequence spans 736 residues: Na(+)/H(+) antiporter NhaA (736 aa).

The segment at Met1–Ala387 is na(+)/H(+) antiporter NhaA. 11 helical membrane-spanning segments follow: residues Ala23–Phe43, Leu58–Leu78, Met96–Leu116, Gly126–Gly146, Val155–Phe175, Ala178–Met198, Met201–Phe221, Val265–Leu285, Ile298–Ile318, Leu334–Leu354, and Ile367–Ala387. The peptidase S49 stretch occupies residues Arg388–Leu736.

This sequence in the N-terminal section; belongs to the NhaA Na(+)/H(+) (TC 2.A.33) antiporter family. The protein in the C-terminal section; belongs to the peptidase S49 family.

The protein localises to the cell inner membrane. It carries out the reaction Na(+)(in) + 2 H(+)(out) = Na(+)(out) + 2 H(+)(in). Na(+)/H(+) antiporter that extrudes sodium in exchange for external protons. This is Na(+)/H(+) antiporter NhaA from Brucella melitensis biotype 1 (strain ATCC 23456 / CCUG 17765 / NCTC 10094 / 16M).